The chain runs to 334 residues: MDERLVSSEADSHESIIEQSLRPQNLAQYIGQKKVKENLRVFIDAAKMRQETLDHVLLYGPPGLGKTTLASIVANEMGVEMRTTSGPAIERPGDLAAILTALEPGDVLFIDEIHRLNRSIEEVLYPAMEDFCLDIVIGKGPSARSVRLDLPPFTLVGATTRVGLLTAPLRDRFGVLSRLEYYTQEELTDIVSRTADVFEVDIEKAPALEIARRSRGTPRVANRLLRRVRDFAQVLGDSRITEEIAHDALERLQVDALGLDHIDHKLLMGMIEKFSGGPVGLDTISATIGEEPHTIEDVYEPYLLQIGFLQRTPRGRVVTPAVYEHFRLEAPARD.

Residues 1-182 (MDERLVSSEA…FGVLSRLEYY (182 aa)) are large ATPase domain (RuvB-L). ATP is bound by residues Leu-21, Arg-22, Gly-63, Lys-66, Thr-67, Thr-68, 129–131 (EDF), Arg-172, Tyr-182, and Arg-219. Thr-67 provides a ligand contact to Mg(2+). Positions 183–253 (TQEELTDIVS…IAHDALERLQ (71 aa)) are small ATPAse domain (RuvB-S). The tract at residues 256 to 334 (ALGLDHIDHK…HFRLEAPARD (79 aa)) is head domain (RuvB-H). The DNA site is built by Arg-311 and Arg-316.

This sequence belongs to the RuvB family. As to quaternary structure, homohexamer. Forms an RuvA(8)-RuvB(12)-Holliday junction (HJ) complex. HJ DNA is sandwiched between 2 RuvA tetramers; dsDNA enters through RuvA and exits via RuvB. An RuvB hexamer assembles on each DNA strand where it exits the tetramer. Each RuvB hexamer is contacted by two RuvA subunits (via domain III) on 2 adjacent RuvB subunits; this complex drives branch migration. In the full resolvosome a probable DNA-RuvA(4)-RuvB(12)-RuvC(2) complex forms which resolves the HJ.

The protein localises to the cytoplasm. The catalysed reaction is ATP + H2O = ADP + phosphate + H(+). In terms of biological role, the RuvA-RuvB-RuvC complex processes Holliday junction (HJ) DNA during genetic recombination and DNA repair, while the RuvA-RuvB complex plays an important role in the rescue of blocked DNA replication forks via replication fork reversal (RFR). RuvA specifically binds to HJ cruciform DNA, conferring on it an open structure. The RuvB hexamer acts as an ATP-dependent pump, pulling dsDNA into and through the RuvAB complex. RuvB forms 2 homohexamers on either side of HJ DNA bound by 1 or 2 RuvA tetramers; 4 subunits per hexamer contact DNA at a time. Coordinated motions by a converter formed by DNA-disengaged RuvB subunits stimulates ATP hydrolysis and nucleotide exchange. Immobilization of the converter enables RuvB to convert the ATP-contained energy into a lever motion, pulling 2 nucleotides of DNA out of the RuvA tetramer per ATP hydrolyzed, thus driving DNA branch migration. The RuvB motors rotate together with the DNA substrate, which together with the progressing nucleotide cycle form the mechanistic basis for DNA recombination by continuous HJ branch migration. Branch migration allows RuvC to scan DNA until it finds its consensus sequence, where it cleaves and resolves cruciform DNA. In Bacillus velezensis (strain DSM 23117 / BGSC 10A6 / LMG 26770 / FZB42) (Bacillus amyloliquefaciens subsp. plantarum), this protein is Holliday junction branch migration complex subunit RuvB.